The following is a 362-amino-acid chain: Isopentenyl-diphosphate delta-isomerase (362 aa).

Substrate is bound at residue Arg5 to Lys6. Residues Ala63–Thr65, Ser93, and Asn122 contribute to the FMN site. Gln152 lines the substrate pocket. Glu153 provides a ligand contact to Mg(2+). FMN-binding positions include Lys184, Thr214, Gly259–Arg261, and Ala280–Gly281.

It belongs to the IPP isomerase type 2 family. In terms of assembly, homooctamer. Dimer of tetramers. It depends on FMN as a cofactor. The cofactor is NADPH. Mg(2+) is required as a cofactor.

It is found in the cytoplasm. The enzyme catalyses isopentenyl diphosphate = dimethylallyl diphosphate. Functionally, involved in the biosynthesis of isoprenoids. Catalyzes the 1,3-allylic rearrangement of the homoallylic substrate isopentenyl (IPP) to its allylic isomer, dimethylallyl diphosphate (DMAPP). The polypeptide is Isopentenyl-diphosphate delta-isomerase (Nocardia farcinica (strain IFM 10152)).